Reading from the N-terminus, the 199-residue chain is dTTP/UTP pyrophosphatase (199 aa).

D73 (proton acceptor) is an active-site residue.

Belongs to the Maf family. YhdE subfamily. It depends on a divalent metal cation as a cofactor.

The protein localises to the cytoplasm. The enzyme catalyses dTTP + H2O = dTMP + diphosphate + H(+). It catalyses the reaction UTP + H2O = UMP + diphosphate + H(+). Its function is as follows. Nucleoside triphosphate pyrophosphatase that hydrolyzes dTTP and UTP. May have a dual role in cell division arrest and in preventing the incorporation of modified nucleotides into cellular nucleic acids. The polypeptide is dTTP/UTP pyrophosphatase (Caldicellulosiruptor saccharolyticus (strain ATCC 43494 / DSM 8903 / Tp8T 6331)).